The chain runs to 210 residues: 3-hydroxy-3-methylglutaryl-coenzyme A reductase 2 (210 aa).

Catalysis depends on charge relay system residues Lys-21 and Asp-97. A helical membrane pass occupies residues 166 to 186 (LLATIVAGSVLAGELSLMSAI). His-195 acts as the Proton donor in catalysis. Asn-199 carries N-linked (GlcNAc...) asparagine glycosylation.

The protein belongs to the HMG-CoA reductase family.

It localises to the endoplasmic reticulum membrane. The protein resides in the mitochondrion membrane. The protein localises to the plastid membrane. It catalyses the reaction (R)-mevalonate + 2 NADP(+) + CoA = (3S)-3-hydroxy-3-methylglutaryl-CoA + 2 NADPH + 2 H(+). It participates in metabolic intermediate biosynthesis; (R)-mevalonate biosynthesis; (R)-mevalonate from acetyl-CoA: step 3/3. Its function is as follows. Catalyzes the synthesis of mevalonate. The specific precursor of all isoprenoid compounds present in plants. The protein is 3-hydroxy-3-methylglutaryl-coenzyme A reductase 2 (HMGR2) of Hevea brasiliensis (Para rubber tree).